The sequence spans 400 residues: Na(+)/H(+) antiporter NhaA 1 (400 aa).

Helical transmembrane passes span I25–M45, I67–I87, I103–F123, I130–L150, I159–A179, S184–A204, W213–E233, V264–I284, I303–V323, L339–L359, and I372–I392.

The protein belongs to the NhaA Na(+)/H(+) (TC 2.A.33) antiporter family.

It is found in the cell membrane. The enzyme catalyses Na(+)(in) + 2 H(+)(out) = Na(+)(out) + 2 H(+)(in). Functionally, na(+)/H(+) antiporter that extrudes sodium in exchange for external protons. In Clostridium beijerinckii (strain ATCC 51743 / NCIMB 8052) (Clostridium acetobutylicum), this protein is Na(+)/H(+) antiporter NhaA 1.